A 379-amino-acid chain; its full sequence is Homoserine O-succinyltransferase (379 aa).

Residues 51–360 enclose the AB hydrolase-1 domain; it reads NAVLICHALS…DSPYGHDAFL (310 aa). S157 (nucleophile) is an active-site residue. R227 is a binding site for substrate. Residues D323 and H356 contribute to the active site. Position 357 (D357) interacts with substrate.

This sequence belongs to the AB hydrolase superfamily. MetX family. Homodimer.

The protein localises to the cytoplasm. It catalyses the reaction L-homoserine + succinyl-CoA = O-succinyl-L-homoserine + CoA. It participates in amino-acid biosynthesis; L-methionine biosynthesis via de novo pathway; O-succinyl-L-homoserine from L-homoserine: step 1/1. Functionally, transfers a succinyl group from succinyl-CoA to L-homoserine, forming succinyl-L-homoserine. This Pseudomonas putida (strain W619) protein is Homoserine O-succinyltransferase.